The following is a 399-amino-acid chain: Succinate--CoA ligase [ADP-forming] subunit beta (399 aa).

The region spanning 9-254 (KAVLKSFGAP…TTEEDEKEIE (246 aa)) is the ATP-grasp domain. ATP contacts are provided by residues Lys-46, 53–55 (GRG), Glu-109, Ala-112, and Glu-117. 2 residues coordinate Mg(2+): Asn-209 and Asp-223. Residues Asn-274 and 331–333 (GIM) each bind substrate.

The protein belongs to the succinate/malate CoA ligase beta subunit family. As to quaternary structure, heterotetramer of two alpha and two beta subunits. Requires Mg(2+) as cofactor.

It catalyses the reaction succinate + ATP + CoA = succinyl-CoA + ADP + phosphate. It carries out the reaction GTP + succinate + CoA = succinyl-CoA + GDP + phosphate. Its pathway is carbohydrate metabolism; tricarboxylic acid cycle; succinate from succinyl-CoA (ligase route): step 1/1. Functionally, succinyl-CoA synthetase functions in the citric acid cycle (TCA), coupling the hydrolysis of succinyl-CoA to the synthesis of either ATP or GTP and thus represents the only step of substrate-level phosphorylation in the TCA. The beta subunit provides nucleotide specificity of the enzyme and binds the substrate succinate, while the binding sites for coenzyme A and phosphate are found in the alpha subunit. This Maricaulis maris (strain MCS10) (Caulobacter maris) protein is Succinate--CoA ligase [ADP-forming] subunit beta.